Here is a 191-residue protein sequence, read N- to C-terminus: Holliday junction branch migration complex subunit RuvA (191 aa).

Positions 1-64 (MIRGVRGTLV…EDELALYGFA (64 aa)) are domain I. The domain II stretch occupies residues 65 to 136 (TEAELELFLS…ELRGRLPALT (72 aa)). The interval 136–139 (TEVQ) is flexible linker. The interval 140–191 (AGEPIDQELVAALQALGYTAQEARQAATHPEVRRAPSLEERIVAALRQLAPP) is domain III.

The protein belongs to the RuvA family. Homotetramer. Forms an RuvA(8)-RuvB(12)-Holliday junction (HJ) complex. HJ DNA is sandwiched between 2 RuvA tetramers; dsDNA enters through RuvA and exits via RuvB. An RuvB hexamer assembles on each DNA strand where it exits the tetramer. Each RuvB hexamer is contacted by two RuvA subunits (via domain III) on 2 adjacent RuvB subunits; this complex drives branch migration. In the full resolvosome a probable DNA-RuvA(4)-RuvB(12)-RuvC(2) complex forms which resolves the HJ.

The protein localises to the cytoplasm. Functionally, the RuvA-RuvB-RuvC complex processes Holliday junction (HJ) DNA during genetic recombination and DNA repair, while the RuvA-RuvB complex plays an important role in the rescue of blocked DNA replication forks via replication fork reversal (RFR). RuvA specifically binds to HJ cruciform DNA, conferring on it an open structure. The RuvB hexamer acts as an ATP-dependent pump, pulling dsDNA into and through the RuvAB complex. HJ branch migration allows RuvC to scan DNA until it finds its consensus sequence, where it cleaves and resolves the cruciform DNA. In Thermomicrobium roseum (strain ATCC 27502 / DSM 5159 / P-2), this protein is Holliday junction branch migration complex subunit RuvA.